We begin with the raw amino-acid sequence, 750 residues long: Methylmalonyl-CoA mutase, mitochondrial (750 aa).

A mitochondrion-targeting transit peptide spans methionine 1 to leucine 32. Malonyl-CoA is bound at residue glutamine 50. An N6-acetyllysine modification is found at lysine 89. Malonyl-CoA contacts are provided by residues tyrosine 96–methionine 99 and threonine 106–tyrosine 110. Lysine 212 bears the N6-acetyllysine mark. Malonyl-CoA-binding positions include threonine 216 to glutamine 218, arginine 228, lysine 255, histidine 265, and arginine 304 to serine 306. At lysine 335 the chain carries N6-acetyllysine. At lysine 343 the chain carries N6-succinyllysine. Position 481 is a phosphoserine (serine 481). Lysine 595 carries the N6-succinyllysine modification. Lysine 602 bears the N6-acetyllysine mark. A B12-binding domain is found at arginine 614–lysine 746. Adenosylcob(III)alamin is bound at residue histidine 627.

The protein belongs to the methylmalonyl-CoA mutase family. As to quaternary structure, homodimer. Interacts (the apoenzyme form) with MMAA; the interaction is GTP dependent. It depends on adenosylcob(III)alamin as a cofactor.

The protein localises to the mitochondrion matrix. The protein resides in the mitochondrion. Its subcellular location is the cytoplasm. The enzyme catalyses (R)-methylmalonyl-CoA = succinyl-CoA. Its activity is regulated as follows. Inhibited by itaconyl-CoA, a metabolite that inactivates the coenzyme B12 cofactor. In terms of biological role, catalyzes the reversible isomerization of methylmalonyl-CoA (MMCoA) (generated from branched-chain amino acid metabolism and degradation of dietary odd chain fatty acids and cholesterol) to succinyl-CoA (3-carboxypropionyl-CoA), a key intermediate of the tricarboxylic acid cycle. This is Methylmalonyl-CoA mutase, mitochondrial (MMUT) from Bos taurus (Bovine).